A 161-amino-acid chain; its full sequence is 2-C-methyl-D-erythritol 2,4-cyclodiphosphate synthase (161 aa).

Residues D8 and H10 each contribute to the a divalent metal cation site. Residues 8–10 (DLH) and 34–35 (HS) contribute to the 4-CDP-2-C-methyl-D-erythritol 2-phosphate site. H42 provides a ligand contact to a divalent metal cation. 4-CDP-2-C-methyl-D-erythritol 2-phosphate is bound by residues 56–58 (DIG), 100–106 (AEYPKML), and R142.

The protein belongs to the IspF family. In terms of assembly, homotrimer. The cofactor is a divalent metal cation.

The enzyme catalyses 4-CDP-2-C-methyl-D-erythritol 2-phosphate = 2-C-methyl-D-erythritol 2,4-cyclic diphosphate + CMP. It participates in isoprenoid biosynthesis; isopentenyl diphosphate biosynthesis via DXP pathway; isopentenyl diphosphate from 1-deoxy-D-xylulose 5-phosphate: step 4/6. Functionally, involved in the biosynthesis of isopentenyl diphosphate (IPP) and dimethylallyl diphosphate (DMAPP), two major building blocks of isoprenoid compounds. Catalyzes the conversion of 4-diphosphocytidyl-2-C-methyl-D-erythritol 2-phosphate (CDP-ME2P) to 2-C-methyl-D-erythritol 2,4-cyclodiphosphate (ME-CPP) with a corresponding release of cytidine 5-monophosphate (CMP). The polypeptide is 2-C-methyl-D-erythritol 2,4-cyclodiphosphate synthase (Buchnera aphidicola subsp. Acyrthosiphon pisum (strain 5A)).